Reading from the N-terminus, the 347-residue chain is Large ribosomal subunit protein uL10 (347 aa).

The tract at residues 310–347 (ATVAAPAAEEEKKEEEPEEEEEDHAEEDGMAGLGALFG) is disordered. Positions 325 to 338 (EPEEEEEDHAEEDG) are enriched in acidic residues.

The protein belongs to the universal ribosomal protein uL10 family. As to quaternary structure, part of the 50S ribosomal subunit. Forms part of the ribosomal stalk which helps the ribosome interact with GTP-bound translation factors. Forms a heptameric L10(L12)2(L12)2(L12)2 complex, where L10 forms an elongated spine to which the L12 dimers bind in a sequential fashion.

Its function is as follows. Forms part of the ribosomal stalk, playing a central role in the interaction of the ribosome with GTP-bound translation factors. This chain is Large ribosomal subunit protein uL10, found in Methanosarcina mazei (strain ATCC BAA-159 / DSM 3647 / Goe1 / Go1 / JCM 11833 / OCM 88) (Methanosarcina frisia).